A 294-amino-acid polypeptide reads, in one-letter code: MTAVPPSCQILDGKALAQKMQGELQRDIAQLVAQGHRSPGLAVLMVGDNPASAVYVRNKEKACEKLGMVSFGKHFSADTDQETLTAAIASLNEDERVDGILVQLPLPDHLDAVKLLHTIDPSKDADGLHPVNLGHLVRGEEGLRSCTPAGVMALLAEYNLDLTGKNAVVLGRSILVGKPLALMLLEKNCTVTIAHSRTQNLADITRQADILVAAIGKPEFVTADMVKPGAIVVDVGINRLDLGEGKSTLVGDVDFAGVAPVASYLTPVPGGIGPMTVTLLLANTVASYRQRLGI.

NADP(+) is bound by residues 171 to 173 (GRS), S196, and I237.

Belongs to the tetrahydrofolate dehydrogenase/cyclohydrolase family. As to quaternary structure, homodimer.

The enzyme catalyses (6R)-5,10-methylene-5,6,7,8-tetrahydrofolate + NADP(+) = (6R)-5,10-methenyltetrahydrofolate + NADPH. It catalyses the reaction (6R)-5,10-methenyltetrahydrofolate + H2O = (6R)-10-formyltetrahydrofolate + H(+). It functions in the pathway one-carbon metabolism; tetrahydrofolate interconversion. Functionally, catalyzes the oxidation of 5,10-methylenetetrahydrofolate to 5,10-methenyltetrahydrofolate and then the hydrolysis of 5,10-methenyltetrahydrofolate to 10-formyltetrahydrofolate. This Synechocystis sp. (strain ATCC 27184 / PCC 6803 / Kazusa) protein is Bifunctional protein FolD.